The sequence spans 197 residues: Peptidyl-tRNA hydrolase (197 aa).

Tyr23 contributes to the tRNA binding site. The active-site Proton acceptor is His28. 3 residues coordinate tRNA: Phe73, Asn75, and Asn121.

This sequence belongs to the PTH family. Monomer.

It is found in the cytoplasm. The enzyme catalyses an N-acyl-L-alpha-aminoacyl-tRNA + H2O = an N-acyl-L-amino acid + a tRNA + H(+). Its function is as follows. Hydrolyzes ribosome-free peptidyl-tRNAs (with 1 or more amino acids incorporated), which drop off the ribosome during protein synthesis, or as a result of ribosome stalling. Catalyzes the release of premature peptidyl moieties from peptidyl-tRNA molecules trapped in stalled 50S ribosomal subunits, and thus maintains levels of free tRNAs and 50S ribosomes. The sequence is that of Peptidyl-tRNA hydrolase from Frankia casuarinae (strain DSM 45818 / CECT 9043 / HFP020203 / CcI3).